A 179-amino-acid polypeptide reads, in one-letter code: Large ribosomal subunit protein uL5 (179 aa).

The protein belongs to the universal ribosomal protein uL5 family. In terms of assembly, part of the 50S ribosomal subunit; part of the 5S rRNA/L5/L18/L25 subcomplex. Contacts the 5S rRNA and the P site tRNA. Forms a bridge to the 30S subunit in the 70S ribosome.

In terms of biological role, this is one of the proteins that bind and probably mediate the attachment of the 5S RNA into the large ribosomal subunit, where it forms part of the central protuberance. In the 70S ribosome it contacts protein S13 of the 30S subunit (bridge B1b), connecting the 2 subunits; this bridge is implicated in subunit movement. Contacts the P site tRNA; the 5S rRNA and some of its associated proteins might help stabilize positioning of ribosome-bound tRNAs. The chain is Large ribosomal subunit protein uL5 from Desulfatibacillum aliphaticivorans.